The chain runs to 440 residues: Ribosomal protein uS12 methylthiotransferase RimO (440 aa).

Positions 8–125 (LRCHAISLGC…WNEQILLALN (118 aa)) constitute an MTTase N-terminal domain. The [4Fe-4S] cluster site is built by cysteine 17, cysteine 52, cysteine 87, cysteine 152, cysteine 156, and cysteine 159. The 231-residue stretch at 138–368 (TTGKSYAWLK…MEIQLKISEK (231 aa)) folds into the Radical SAM core domain. Residues 371-439 (KNFVGKRLSL…SYDLVALADS (69 aa)) enclose the TRAM domain.

It belongs to the methylthiotransferase family. RimO subfamily. It depends on [4Fe-4S] cluster as a cofactor.

Its subcellular location is the cytoplasm. The enzyme catalyses L-aspartate(89)-[ribosomal protein uS12]-hydrogen + (sulfur carrier)-SH + AH2 + 2 S-adenosyl-L-methionine = 3-methylsulfanyl-L-aspartate(89)-[ribosomal protein uS12]-hydrogen + (sulfur carrier)-H + 5'-deoxyadenosine + L-methionine + A + S-adenosyl-L-homocysteine + 2 H(+). Its function is as follows. Catalyzes the methylthiolation of an aspartic acid residue of ribosomal protein uS12. This is Ribosomal protein uS12 methylthiotransferase RimO from Lawsonia intracellularis (strain PHE/MN1-00).